Reading from the N-terminus, the 175-residue chain is Type-2 ice-structuring protein (175 aa).

The signal sequence occupies residues 1 to 16; it reads MLAALLVCAMVALTRA. The propeptide occupies 17-33; the sequence is ANGDTGKEAVMTGSSGK. The 128-residue stretch at 36-163 folds into the C-type lectin domain; it reads TECPTDWKMF…LHASVCAKPA (128 aa). 5 disulfides stabilise this stretch: Cys-38/Cys-49, Cys-66/Cys-159, Cys-103/Cys-134, Cys-123/Cys-145, and Cys-135/Cys-151.

The protein resides in the secreted. Functionally, antifreeze proteins lower the blood freezing point. The chain is Type-2 ice-structuring protein from Osmerus mordax (Rainbow smelt).